The primary structure comprises 93 residues: YcgL domain-containing protein VIBHAR_01387 (93 aa).

The YcgL domain occupies 1–84; that stretch reads MLCSIYKSSR…PPENLLEKYK (84 aa).

The polypeptide is YcgL domain-containing protein VIBHAR_01387 (Vibrio campbellii (strain ATCC BAA-1116)).